Here is a 238-residue protein sequence, read N- to C-terminus: Flagellar L-ring protein (238 aa).

The signal sequence occupies residues 1-16 (MNKAILAVAMVLLLAG). Residue Cys17 is the site of N-palmitoyl cysteine attachment. Residue Cys17 is the site of S-diacylglycerol cysteine attachment.

The protein belongs to the FlgH family. The basal body constitutes a major portion of the flagellar organelle and consists of four rings (L,P,S, and M) mounted on a central rod.

It localises to the cell outer membrane. The protein resides in the bacterial flagellum basal body. Its function is as follows. Assembles around the rod to form the L-ring and probably protects the motor/basal body from shearing forces during rotation. This Brucella melitensis biotype 2 (strain ATCC 23457) protein is Flagellar L-ring protein.